The sequence spans 79 residues: Moronecidin (79 aa).

The N-terminal stretch at 1-22 (MKCATLFLVLSMVVLMAEPGDA) is a signal peptide. Glycine 44 bears the Glycine amide mark. The segment at 45 to 79 (GKAEQDQQDQQYQQEQQEQQAQQYQRFNRERAAFD) is disordered. The propeptide occupies 47-79 (AEQDQQDQQYQQEQQEQQAQQYQRFNRERAAFD). Residues 52–69 (QDQQYQQEQQEQQAQQYQ) are compositionally biased toward low complexity.

As to expression, expressed in mast cells in gill, skin and gut, and in lining blood vessels in the viscera. Also in intestine, spleen, anterior kidney, and blood cells.

Its subcellular location is the secreted. Its function is as follows. Antimicrobial peptide with broad-spectrum activity against Gram-positive and Gram-negative bacteria as well as against a variety of fungi. Rapidly inactivates channel catfish herpesvirus (ED(50)=4 uM) and frog virus 3 (ED(50)=13 uM) over a wide temperature range. Seems to disrupt the membranes by adopting an alpha helical conformation and forming toroidal pores. Has hemolytic activity. The polypeptide is Moronecidin (Morone saxatilis (Striped bass)).